The primary structure comprises 170 residues: Large ribosomal subunit protein bL9 (170 aa).

Residues 149–170 (DGDNEDLDEDNAADENEDYSEE) are disordered.

The protein belongs to the bacterial ribosomal protein bL9 family.

Its function is as follows. Binds to the 23S rRNA. This Psychrobacter cryohalolentis (strain ATCC BAA-1226 / DSM 17306 / VKM B-2378 / K5) protein is Large ribosomal subunit protein bL9.